The chain runs to 333 residues: Glycerol-3-phosphate dehydrogenase [NAD(P)+] (333 aa).

NADPH is bound by residues S10, F11, R31, and K105. Positions 105, 136, and 138 each coordinate sn-glycerol 3-phosphate. Residue A140 coordinates NADPH. 5 residues coordinate sn-glycerol 3-phosphate: K191, D244, S254, R255, and N256. The active-site Proton acceptor is K191. R255 is an NADPH binding site. 2 residues coordinate NADPH: V279 and E281.

This sequence belongs to the NAD-dependent glycerol-3-phosphate dehydrogenase family.

It localises to the cytoplasm. It catalyses the reaction sn-glycerol 3-phosphate + NAD(+) = dihydroxyacetone phosphate + NADH + H(+). It carries out the reaction sn-glycerol 3-phosphate + NADP(+) = dihydroxyacetone phosphate + NADPH + H(+). It participates in membrane lipid metabolism; glycerophospholipid metabolism. Its function is as follows. Catalyzes the reduction of the glycolytic intermediate dihydroxyacetone phosphate (DHAP) to sn-glycerol 3-phosphate (G3P), the key precursor for phospholipid synthesis. The polypeptide is Glycerol-3-phosphate dehydrogenase [NAD(P)+] (Leptospira biflexa serovar Patoc (strain Patoc 1 / Ames)).